The following is a 308-amino-acid chain: uncharacterized protein (308 aa).

The tract at residues Gly-158–Glu-221 is disordered. Basic and acidic residues predominate over residues Arg-206–Glu-221.

This is an uncharacterized protein from Arabidopsis thaliana (Mouse-ear cress).